The following is a 130-amino-acid chain: Probable pilin MJ0835.1 (130 aa).

The propeptide occupies 1-14 (MNTMENKIIKSKKA). Residues 15–23 (QVSLEFSFL) carry the QXSXEXXXL motif.

The N-terminus is cleaved by the prepilin peptidase EppA, which recognizes the class III signal sequence.

It localises to the secreted. The protein localises to the cell surface. Its subcellular location is the fimbrium. The chain is Probable pilin MJ0835.1 from Methanocaldococcus jannaschii (strain ATCC 43067 / DSM 2661 / JAL-1 / JCM 10045 / NBRC 100440) (Methanococcus jannaschii).